A 704-amino-acid chain; its full sequence is Elongation factor G (704 aa).

The region spanning 8–291 (DKVRNIGIMA…AVVEYLASPV (284 aa)) is the tr-type G domain. GTP contacts are provided by residues 17–24 (AHIDAGKT), 90–94 (DTPGH), and 144–147 (NKMD).

The protein belongs to the TRAFAC class translation factor GTPase superfamily. Classic translation factor GTPase family. EF-G/EF-2 subfamily.

The protein resides in the cytoplasm. In terms of biological role, catalyzes the GTP-dependent ribosomal translocation step during translation elongation. During this step, the ribosome changes from the pre-translocational (PRE) to the post-translocational (POST) state as the newly formed A-site-bound peptidyl-tRNA and P-site-bound deacylated tRNA move to the P and E sites, respectively. Catalyzes the coordinated movement of the two tRNA molecules, the mRNA and conformational changes in the ribosome. This is Elongation factor G from Chlorobium limicola (strain DSM 245 / NBRC 103803 / 6330).